The following is a 207-amino-acid chain: Outer-membrane lipoprotein carrier protein (207 aa).

Residues 1–23 (MMKPHNLFQFLAVCSLTVAVASA) form the signal peptide.

Belongs to the LolA family. Monomer.

It localises to the periplasm. In terms of biological role, participates in the translocation of lipoproteins from the inner membrane to the outer membrane. Only forms a complex with a lipoprotein if the residue after the N-terminal Cys is not an aspartate (The Asp acts as a targeting signal to indicate that the lipoprotein should stay in the inner membrane). This is Outer-membrane lipoprotein carrier protein from Neisseria gonorrhoeae (strain ATCC 700825 / FA 1090).